Reading from the N-terminus, the 835-residue chain is Leucine--tRNA ligase (835 aa).

The short motif at 36–46 is the 'HIGH' region element; sequence PYPSGKIHVGH. Positions 602 to 606 match the 'KMSKS' region motif; the sequence is KMSKS. K605 contributes to the ATP binding site.

It belongs to the class-I aminoacyl-tRNA synthetase family.

It is found in the cytoplasm. It carries out the reaction tRNA(Leu) + L-leucine + ATP = L-leucyl-tRNA(Leu) + AMP + diphosphate. The polypeptide is Leucine--tRNA ligase (Rickettsia felis (strain ATCC VR-1525 / URRWXCal2) (Rickettsia azadi)).